The sequence spans 217 residues: Peroxiredoxin (217 aa).

A Thioredoxin domain is found at 2–159 (PVIGEKFPEV…IVRLVKALQV (158 aa)). The active-site Cysteine sulfenic acid (-SOH) intermediate is the Cys46. Substrate is bound at residue Arg122. An intrachain disulfide couples Cys206 to Cys212.

This sequence belongs to the peroxiredoxin family. Prx6 subfamily. In terms of assembly, homodecamer. Pentamer of dimers that assemble into a ring structure.

It is found in the cytoplasm. The catalysed reaction is a hydroperoxide + [thioredoxin]-dithiol = an alcohol + [thioredoxin]-disulfide + H2O. Functionally, thiol-specific peroxidase that catalyzes the reduction of hydrogen peroxide and organic hydroperoxides to water and alcohols, respectively. Plays a role in cell protection against oxidative stress by detoxifying peroxides. The protein is Peroxiredoxin of Methanocaldococcus jannaschii (strain ATCC 43067 / DSM 2661 / JAL-1 / JCM 10045 / NBRC 100440) (Methanococcus jannaschii).